A 103-amino-acid polypeptide reads, in one-letter code: Large ribosomal subunit protein uL24 (103 aa).

Belongs to the universal ribosomal protein uL24 family. In terms of assembly, part of the 50S ribosomal subunit.

One of two assembly initiator proteins, it binds directly to the 5'-end of the 23S rRNA, where it nucleates assembly of the 50S subunit. Its function is as follows. One of the proteins that surrounds the polypeptide exit tunnel on the outside of the subunit. The polypeptide is Large ribosomal subunit protein uL24 (Listeria monocytogenes serotype 4a (strain HCC23)).